We begin with the raw amino-acid sequence, 908 residues long: Autophagy-related protein 9 (908 aa).

The Cytoplasmic segment spans residues 1-216 (MADGVIARLM…SGMWCIVVER (216 aa)). The disordered stretch occupies residues 64–162 (SRATVDGRIP…IDQELQPPLH (99 aa)). Residues 217 to 237 (VLHLIKVAFVAFLLTFLSQCV) traverse the membrane as a helical segment. The Lumenal portion of the chain corresponds to 238–259 (DFKKIPSNQKLSQVLVPQCTRN). A glycan (N-linked (GlcNAc...) asparagine) is linked at Asn259. The helical transmembrane segment at 260-280 (MSGLWNIGLWLFAFYFMWKSI) threads the bilayer. Residues 281 to 433 (QYILDLRRLT…GILSAKLRSR (153 aa)) are Cytoplasmic-facing. Residues 434 to 454 (FIFAGVMILILSPFVAGYLII) lie within the membrane without spanning it. Topologically, residues 455–525 (VYFLEYYNEI…KTSMVAKTVS (71 aa)) are cytoplasmic. Residues 526 to 546 (FIAGSIATVLALISVFDPEMF) traverse the membrane as a helical segment. Over 547 to 555 (LGFEITHDR) the chain is Lumenal. The chain crosses the membrane as a helical span at residues 556 to 576 (TVLFYTAVFGAIWSVARGSVS). Over 577–622 (EDNAVFDPEYALGNVVEYTHYQPEHWKDRWHSADVKAEFEELYKLK) the chain is Cytoplasmic. Residues 623-643 (LVIFIEEILSILTTPFVLFFS) lie within the membrane without spanning it. At 644 to 908 (LPKSADQIID…HLNRRLGGVR (265 aa)) the chain is on the cytoplasmic side. 2 disordered regions span residues 751 to 779 (AASR…AVMA) and 809 to 878 (QFRG…DSVV). Positions 813–825 (GNQGDGHMMGGGS) are enriched in gly residues. Basic and acidic residues predominate over residues 839-852 (QTHDDESEDSRAGL).

It belongs to the ATG9 family. Homotrimer; forms a homotrimer with a central pore that forms a path between the two membrane leaflets. Post-translationally, phosphorylated by apg-1. Apg-1 phosphorylation is required for preautophagosome elongation.

It is found in the preautophagosomal structure membrane. Its subcellular location is the cytoplasmic vesicle membrane. The protein resides in the golgi apparatus membrane. The protein localises to the endoplasmic reticulum membrane. It carries out the reaction a 1,2-diacyl-sn-glycero-3-phosphocholine(in) = a 1,2-diacyl-sn-glycero-3-phosphocholine(out). It catalyses the reaction a 1,2-diacyl-sn-glycero-3-phospho-L-serine(in) = a 1,2-diacyl-sn-glycero-3-phospho-L-serine(out). The enzyme catalyses a 1,2-diacyl-sn-glycero-3-phosphoethanolamine(in) = a 1,2-diacyl-sn-glycero-3-phosphoethanolamine(out). The catalysed reaction is a 1,2-diacyl-sn-glycero-3-phospho-(1D-myo-inositol-3-phosphate)(in) = a 1,2-diacyl-sn-glycero-3-phospho-(1D-myo-inositol-3-phosphate)(out). Phospholipid scramblase involved in autophagy and cytoplasm to vacuole transport (Cvt) vesicle formation. Cycles between the preautophagosomal structure/phagophore assembly site (PAS) and the cytoplasmic vesicle pool and supplies membrane for the growing autophagosome. Lipid scramblase activity plays a key role in preautophagosomal structure/phagophore assembly by distributing the phospholipids that arrive through atg-2 from the cytoplasmic to the luminal leaflet of the bilayer, thereby driving autophagosomal membrane expansion. Required for mitophagy. Also involved in endoplasmic reticulum-specific autophagic process and is essential for the survival of cells subjected to severe ER stress. Different machineries are required for anterograde trafficking to the PAS during either the Cvt pathway or bulk autophagy and for retrograde trafficking. In Neurospora crassa (strain ATCC 24698 / 74-OR23-1A / CBS 708.71 / DSM 1257 / FGSC 987), this protein is Autophagy-related protein 9 (apg-7).